Here is a 715-residue protein sequence, read N- to C-terminus: Arginine kinase (715 aa).

2 Approximate repeats span residues 1 to 366 (MADP…IAKK) and 367 to 715 (RSVF…KSTK). The region spanning 11–95 (KSKNAFPDPL…FDAIIEDYHS (85 aa)) is the Phosphagen kinase N-terminal 1 domain. 68–72 (GVGVY) lines the substrate pocket. Residues 123–362 (YIRSTRIRVA…KALMELEKEA (240 aa)) enclose the Phosphagen kinase C-terminal 1 domain. Residues 126–130 (STRIR) and His189 each bind ATP. Position 229 (Glu229) interacts with substrate. Residue Arg233 coordinates ATP. Cys275 is a substrate binding site. ATP contacts are provided by residues 284-288 (RASVH) and 312-317 (RGIHGE). Glu317 contributes to the substrate binding site. The Phosphagen kinase N-terminal 2 domain maps to 365–447 (KKRSVFPEVL…FDKIVEDYHS (83 aa)). The 240-residue stretch at 475 to 714 (YIRSTRIRVA…KKLLEIEKST (240 aa)) folds into the Phosphagen kinase C-terminal 2 domain.

Belongs to the ATP:guanido phosphotransferase family. In terms of assembly, monomer.

It carries out the reaction L-arginine + ATP = N(omega)-phospho-L-arginine + ADP + H(+). The polypeptide is Arginine kinase (Anthopleura japonica (Sea anemone)).